The chain runs to 502 residues: ATP synthase subunit alpha (502 aa).

Residue 169–176 participates in ATP binding; the sequence is GDRQTGKT.

Belongs to the ATPase alpha/beta chains family. In terms of assembly, F-type ATPases have 2 components, CF(1) - the catalytic core - and CF(0) - the membrane proton channel. CF(1) has five subunits: alpha(3), beta(3), gamma(1), delta(1), epsilon(1). CF(0) has three main subunits: a(1), b(2) and c(9-12). The alpha and beta chains form an alternating ring which encloses part of the gamma chain. CF(1) is attached to CF(0) by a central stalk formed by the gamma and epsilon chains, while a peripheral stalk is formed by the delta and b chains.

The protein localises to the cell inner membrane. The enzyme catalyses ATP + H2O + 4 H(+)(in) = ADP + phosphate + 5 H(+)(out). In terms of biological role, produces ATP from ADP in the presence of a proton gradient across the membrane. The alpha chain is a regulatory subunit. This is ATP synthase subunit alpha from Geobacter sp. (strain M21).